The chain runs to 249 residues: tRNA pseudouridine synthase A (249 aa).

Asp-53 functions as the Nucleophile in the catalytic mechanism. Tyr-111 is a binding site for substrate.

Belongs to the tRNA pseudouridine synthase TruA family. In terms of assembly, homodimer.

The enzyme catalyses uridine(38/39/40) in tRNA = pseudouridine(38/39/40) in tRNA. Formation of pseudouridine at positions 38, 39 and 40 in the anticodon stem and loop of transfer RNAs. The polypeptide is tRNA pseudouridine synthase A (Streptococcus pyogenes serotype M1).